We begin with the raw amino-acid sequence, 324 residues long: Probable UDP-sugar transporter protein SLC35A4 (324 aa).

The Cytoplasmic portion of the chain corresponds to 1-18 (MSVEDGGLPGLGGPGQAR). The chain crosses the membrane as a helical span at residues 19 to 39 (WTLMLLLSTATYGAHAPLLAL). Topologically, residues 40-52 (CHVDGRVPFRPSS) are lumenal. Residues 53 to 73 (AVLLTELTKLLLCALSLLVGW) traverse the membrane as a helical segment. Over 74–85 (QAWPPRTPPWRQ) the chain is Cytoplasmic. A helical membrane pass occupies residues 86–106 (AAPFALSALLYGANNNLVIHL). Residues 107–140 (QHYMDPSTYQVLSNLKIGSTALFYCLCLRRRLSA) lie on the Lumenal side of the membrane. Residues 141-161 (RQGLALLLLMAAGACYAAGGL) traverse the membrane as a helical segment. The Cytoplasmic portion of the chain corresponds to 162 to 177 (RDPGSPLPESPSTAAS). A helical membrane pass occupies residues 178-198 (GPVPLHVTAPGLLLLLLYCLI). Over 199-214 (SGLSSVYTELLLKRQR) the chain is Lumenal. A helical transmembrane segment spans residues 215-235 (LPLALQNLFLYTFGVLLNLGL). Residues 236–248 (HAGGGPGPGLLEG) lie on the Cytoplasmic side of the membrane. Residues 249-271 (FSGWAALVVLSQALNGLLMSAVM) form a helical membrane-spanning segment. At 272–279 (KHGSSITR) the chain is on the lumenal side. The chain crosses the membrane as a helical span at residues 280-300 (LFVVSCSLVVNAVLSAALLRL). Residues 301–324 (QLTAAFFLAALLIGLAVHLYYGSR) are Cytoplasmic-facing.

It belongs to the nucleotide-sugar transporter family. SLC35A subfamily. As to quaternary structure, found in a complex with SLC35A2 and SLC35A3.

Its subcellular location is the golgi apparatus membrane. It catalyses the reaction CDP-L-ribitol(in) + CDP(out) = CDP-L-ribitol(out) + CDP(in). Mediates the transport of CDP-ribitol. Does not exhibit CMP-sialic acid, UDP-galactose and UDP-N-acetylglucosamine transport activity. This chain is Probable UDP-sugar transporter protein SLC35A4, found in Sus scrofa (Pig).